The sequence spans 239 residues: Exosome complex component Rrp41 (239 aa).

The interval 1-21 (MEERPERLISEDGLRLDGRKP) is disordered.

The protein belongs to the RNase PH family. Rrp41 subfamily. In terms of assembly, component of the archaeal exosome complex. Forms a hexameric ring-like arrangement composed of 3 Rrp41-Rrp42 heterodimers. The hexameric ring associates with a trimer of Rrp4 and/or Csl4 subunits.

It is found in the cytoplasm. Functionally, catalytic component of the exosome, which is a complex involved in RNA degradation. Has 3'-&gt;5' exoribonuclease activity. Can also synthesize heteromeric RNA-tails. The protein is Exosome complex component Rrp41 of Methanopyrus kandleri (strain AV19 / DSM 6324 / JCM 9639 / NBRC 100938).